The following is a 518-amino-acid chain: Lycopene epsilon cyclase, chloroplastic (518 aa).

100-128 (LIVIGCGPAGMSLAAEAGKRGLSVGLIGP) is a binding site for NAD(+). The next 2 membrane-spanning stretches (helical) occupy residues 435-455 (FFLFGLALILQLDIDGIRIFF) and 469-489 (FLGSTLSSAGLIWFAFYMFAI).

The protein belongs to the lycopene cyclase family. In terms of tissue distribution, expressed in leaves and roots. Detected in flower buds and lips.

The protein resides in the plastid. It is found in the chloroplast membrane. It carries out the reaction a carotenoid psi-end group = a carotenoid epsilon-end group. It functions in the pathway carotenoid biosynthesis; alpha-zeacarotene biosynthesis. The protein operates within carotenoid biosynthesis; delta-carotene biosynthesis. Its function is as follows. Catalyzes the single epsilon-cyclization reaction which converts lycopene to delta-carotene and neurosporene to alpha-zeacarotene. Required for lutein biosynthesis. This is Lycopene epsilon cyclase, chloroplastic from Oncidium hybrid cultivar (Orchid).